The primary structure comprises 1360 residues: S-layer protein A (1360 aa).

A signal peptide spans 1 to 24 (MNKSAIRYLSLLLVFLMGGSFLAG).

The protein belongs to the Sulfolobales SlaA family. In terms of assembly, the mushroom-shaped unit cells of the Sulfolobales' S-layers may consist of three SlaB subunits and six SlaA subunits.

Its subcellular location is the secreted. It is found in the cell wall. It localises to the S-layer. Its function is as follows. S-layer large protein. May form the highly ordered outer sheath. The chain is S-layer protein A from Metallosphaera sedula (strain ATCC 51363 / DSM 5348 / JCM 9185 / NBRC 15509 / TH2).